Here is a 454-residue protein sequence, read N- to C-terminus: Pup--protein ligase (454 aa).

Glu-9 is a binding site for Mg(2+). Arg-53 is a binding site for ATP. Residue Tyr-55 participates in Mg(2+) binding. Asp-57 serves as the catalytic Proton acceptor. Residue Glu-63 coordinates Mg(2+). Thr-66 and Trp-421 together coordinate ATP.

The protein belongs to the Pup ligase/Pup deamidase family. Pup-conjugating enzyme subfamily.

The catalysed reaction is ATP + [prokaryotic ubiquitin-like protein]-L-glutamate + [protein]-L-lysine = ADP + phosphate + N(6)-([prokaryotic ubiquitin-like protein]-gamma-L-glutamyl)-[protein]-L-lysine.. Its pathway is protein degradation; proteasomal Pup-dependent pathway. It participates in protein modification; protein pupylation. Catalyzes the covalent attachment of the prokaryotic ubiquitin-like protein modifier Pup to the proteasomal substrate proteins, thereby targeting them for proteasomal degradation. This tagging system is termed pupylation. The ligation reaction involves the side-chain carboxylate of the C-terminal glutamate of Pup and the side-chain amino group of a substrate lysine. The chain is Pup--protein ligase from Frankia casuarinae (strain DSM 45818 / CECT 9043 / HFP020203 / CcI3).